A 401-amino-acid polypeptide reads, in one-letter code: MGRAKKVVLAYSGGVDTSVCIPYLKHEWGVEEVITFAADLGQGDELDPIRLKALDAGASQSLVGDLIEPFVEQFALPAIRANALYEGRYPLSTALARPLIARQLVEVAREVGADAVAHGCTGKGNDQVRFDLAIAALAPDLKVLTPAREWSMSREEAIAYGERCGIPAPVSKKSPYSIDLNLLGRSIEAGPLEDLMVAPPEEVFAMTSSIDAAPSQAQDIEISFEAGNPVAIDGVRLDSVGLIKEANRLAGRHGFGRLDIIENRVVGIKSREIYETPGLLLLIRAHQELESLTLAADVLRMKRQLEMQWAELVYQGLWFSPLKDALDGFMDRTQTYVNGLVRIRLQKGNAMVIGRSSDTNSLYISEMATYGSEDNFDHRAAEGFIYIWGLPSRLWAAARRG.

Residues 10-18 (AYSGGVDTS) and alanine 38 each bind ATP. Tyrosine 89 provides a ligand contact to L-citrulline. Glycine 119 is a binding site for ATP. 3 residues coordinate L-aspartate: threonine 121, asparagine 125, and aspartate 126. An L-citrulline-binding site is contributed by asparagine 125. Residues arginine 129, serine 177, serine 186, glutamate 262, and tyrosine 274 each coordinate L-citrulline.

The protein belongs to the argininosuccinate synthase family. Type 1 subfamily. Homotetramer.

Its subcellular location is the cytoplasm. The enzyme catalyses L-citrulline + L-aspartate + ATP = 2-(N(omega)-L-arginino)succinate + AMP + diphosphate + H(+). It participates in amino-acid biosynthesis; L-arginine biosynthesis; L-arginine from L-ornithine and carbamoyl phosphate: step 2/3. The sequence is that of Argininosuccinate synthase from Prochlorococcus marinus (strain MIT 9313).